The chain runs to 98 residues: NADH-ubiquinone oxidoreductase chain 4L (98 aa).

The next 3 helical transmembrane spans lie at 1–21 (MSLI…GLLM), 29–49 (SLLC…MMVL), and 61–81 (IILL…LVMI).

It belongs to the complex I subunit 4L family. In terms of assembly, core subunit of respiratory chain NADH dehydrogenase (Complex I) which is composed of 45 different subunits.

Its subcellular location is the mitochondrion inner membrane. It carries out the reaction a ubiquinone + NADH + 5 H(+)(in) = a ubiquinol + NAD(+) + 4 H(+)(out). Its function is as follows. Core subunit of the mitochondrial membrane respiratory chain NADH dehydrogenase (Complex I) which catalyzes electron transfer from NADH through the respiratory chain, using ubiquinone as an electron acceptor. Part of the enzyme membrane arm which is embedded in the lipid bilayer and involved in proton translocation. The chain is NADH-ubiquinone oxidoreductase chain 4L (MT-ND4L) from Ceratotherium simum (White rhinoceros).